We begin with the raw amino-acid sequence, 470 residues long: Neuraminidase (470 aa).

Over 1–14 (MNPNQKIITIGSIS) the chain is Intravirion. The tract at residues 11–32 (GSISLGLVVFNVLLHVVSIIVT) is involved in apical transport and lipid raft association. The helical transmembrane segment at 15–35 (LGLVVFNVLLHVVSIIVTVLV) threads the bilayer. The tract at residues 32-86 (TVLVLGKGGNNGICNETVVREYNETVRIEKVTQWHNTNVVEYVPYWNGGTYMNNT) is hypervariable stalk region. At 36 to 470 (LGKGGNNGIC…AILPFDIDKM (435 aa)) the chain is on the virion surface side. 3 N-linked (GlcNAc...) asparagine; by host glycosylation sites follow: asparagine 46, asparagine 54, and asparagine 84. The head of neuraminidase stretch occupies residues 89–470 (ICDAKGFAPF…AILPFDIDKM (382 aa)). Disulfide bonds link cysteine 90/cysteine 417, cysteine 122/cysteine 127, cysteine 182/cysteine 229, cysteine 231/cysteine 236, cysteine 277/cysteine 290, cysteine 279/cysteine 288, cysteine 316/cysteine 335, and cysteine 421/cysteine 446. Arginine 116 provides a ligand contact to substrate. N-linked (GlcNAc...) asparagine; by host glycosylation is present at asparagine 144. The Proton donor/acceptor role is filled by aspartate 149. Arginine 150 is a substrate binding site. Substrate is bound at residue 275–276 (EE). Arginine 291 lines the substrate pocket. Ca(2+) is bound by residues aspartate 292, glycine 296, and aspartate 322. Arginine 368 lines the substrate pocket. Asparagine 398 carries N-linked (GlcNAc...) asparagine; by host glycosylation. Tyrosine 402 serves as the catalytic Nucleophile.

It belongs to the glycosyl hydrolase 34 family. In terms of assembly, homotetramer. Ca(2+) serves as cofactor. In terms of processing, N-glycosylated.

The protein resides in the virion membrane. Its subcellular location is the host apical cell membrane. The catalysed reaction is Hydrolysis of alpha-(2-&gt;3)-, alpha-(2-&gt;6)-, alpha-(2-&gt;8)- glycosidic linkages of terminal sialic acid residues in oligosaccharides, glycoproteins, glycolipids, colominic acid and synthetic substrates.. Inhibited by the neuraminidase inhibitors zanamivir (Relenza) and oseltamivir (Tamiflu). These drugs interfere with the release of progeny virus from infected cells and are effective against all influenza strains. Resistance to neuraminidase inhibitors is quite rare. Catalyzes the removal of terminal sialic acid residues from viral and cellular glycoconjugates. Cleaves off the terminal sialic acids on the glycosylated HA during virus budding to facilitate virus release. Additionally helps virus spread through the circulation by further removing sialic acids from the cell surface. These cleavages prevent self-aggregation and ensure the efficient spread of the progeny virus from cell to cell. Otherwise, infection would be limited to one round of replication. Described as a receptor-destroying enzyme because it cleaves a terminal sialic acid from the cellular receptors. May facilitate viral invasion of the upper airways by cleaving the sialic acid moieties on the mucin of the airway epithelial cells. Likely to plays a role in the budding process through its association with lipid rafts during intracellular transport. May additionally display a raft-association independent effect on budding. Plays a role in the determination of host range restriction on replication and virulence. Sialidase activity in late endosome/lysosome traffic seems to enhance virus replication. The polypeptide is Neuraminidase (Influenza A virus (strain A/Duck/Ukraine/1/1963 H3N8)).